The chain runs to 37 residues: Non-specific lipid-transfer protein P4 (37 aa).

It belongs to the plant LTP family.

It localises to the secreted. Its function is as follows. Plant non-specific lipid-transfer proteins transfer phospholipids as well as galactolipids across membranes. May play a role in wax or cutin deposition in the cell walls of expanding epidermal cells and certain secretory tissues. The polypeptide is Non-specific lipid-transfer protein P4 (Vitis sp. (Grape)).